A 122-amino-acid polypeptide reads, in one-letter code: Ribonuclease pancreatic (122 aa).

The substrate site is built by lysine 6 and arginine 9. The Proton acceptor role is filled by histidine 11. 4 disulfide bridges follow: cysteine 25–cysteine 83, cysteine 39–cysteine 94, cysteine 57–cysteine 109, and cysteine 64–cysteine 71. Substrate is bound by residues 40 to 44, lysine 65, and arginine 84; that span reads KPVNT. Histidine 117 serves as the catalytic Proton donor.

It belongs to the pancreatic ribonuclease family. As to quaternary structure, monomer. Interacts with and forms tight 1:1 complexes with RNH1. Dimerization of two such complexes may occur. Interaction with RNH1 inhibits this protein. As to expression, pancreas.

It is found in the secreted. The enzyme catalyses an [RNA] containing cytidine + H2O = an [RNA]-3'-cytidine-3'-phosphate + a 5'-hydroxy-ribonucleotide-3'-[RNA].. It carries out the reaction an [RNA] containing uridine + H2O = an [RNA]-3'-uridine-3'-phosphate + a 5'-hydroxy-ribonucleotide-3'-[RNA].. Functionally, endonuclease that catalyzes the cleavage of RNA on the 3' side of pyrimidine nucleotides. Acts on single-stranded and double-stranded RNA. In Notamacropus rufogriseus (Red-necked wallaby), this protein is Ribonuclease pancreatic.